A 37-amino-acid polypeptide reads, in one-letter code: uncharacterized protein (37 aa).

Positions 1–23 (MLNFSLCLYPVFILNKLVLRTQS) are cleaved as a signal peptide.

This sequence belongs to the orthopoxviruses VACWR204.5 protein family.

This is an uncharacterized protein from Vaccinia virus (strain Western Reserve) (VACV).